Reading from the N-terminus, the 133-residue chain is Putative nickel-responsive regulator (133 aa).

Residues His-74, His-85, His-87, and Cys-93 each contribute to the Ni(2+) site.

Belongs to the transcriptional regulatory CopG/NikR family. Ni(2+) is required as a cofactor.

Its function is as follows. Transcriptional regulator. The sequence is that of Putative nickel-responsive regulator from Saccharolobus solfataricus (strain ATCC 35092 / DSM 1617 / JCM 11322 / P2) (Sulfolobus solfataricus).